A 347-amino-acid chain; its full sequence is MSVMFDPDTAIYPFPPKPTPLSIDEKAYYREKIKRLLKERNAVMVAHYYTDPEIQQLAEETGGCISDSLEMARFGAKHPASTLLVAGVRFMGETAKILSPEKTILMPTLQAECSLDLGCPVEEFNAFCDAHPDRTVVVYANTSAAVKARADWVVTSSIAVELIDHLDSLGEKIIWAPDTHLGRYVQKQTGADILCWQGACIVHDEFKTQALTRLQEEYPDAAILVHPESPQAIVEMADAVGSTSQLIAAAKTLQHQRLIVATDRGIFYKMQQAVPDKELLEAPTAGEGATCRSCAHCPWMAMNGLQAIAEALEQEGSNHEVYVDERLRERALVPLNRMLDFAATLRG.

2 residues coordinate iminosuccinate: histidine 47 and serine 68. Cysteine 113 provides a ligand contact to [4Fe-4S] cluster. Iminosuccinate-binding positions include 139-141 (YAN) and serine 156. Cysteine 200 provides a ligand contact to [4Fe-4S] cluster. Residues 226–228 (HPE) and threonine 243 contribute to the iminosuccinate site. Residue cysteine 297 participates in [4Fe-4S] cluster binding.

Belongs to the quinolinate synthase family. Type 1 subfamily. [4Fe-4S] cluster is required as a cofactor.

Its subcellular location is the cytoplasm. It catalyses the reaction iminosuccinate + dihydroxyacetone phosphate = quinolinate + phosphate + 2 H2O + H(+). It participates in cofactor biosynthesis; NAD(+) biosynthesis; quinolinate from iminoaspartate: step 1/1. Functionally, catalyzes the condensation of iminoaspartate with dihydroxyacetone phosphate to form quinolinate. The polypeptide is Quinolinate synthase (Escherichia coli O127:H6 (strain E2348/69 / EPEC)).